A 490-amino-acid chain; its full sequence is Calcium-dependent protein kinase 12 (490 aa).

The 259-residue stretch at 22–280 (YFLGQVLGQG…AHQVLCHPWI (259 aa)) folds into the Protein kinase domain. ATP-binding positions include 28–36 (LGQGQFGTT) and Lys51. Asp146 acts as the Proton acceptor in catalysis. Position 186 is a phosphoserine (Ser186). An autoinhibitory domain region spans residues 286–316 (APDKPLDCAVVSRLKKFSAMNKLKKMALRVI). EF-hand domains are found at residues 323-358 (EEIGGLKELFKMIDTDKSGTITFEELKDSMRRVGSE), 359-394 (LMESEIQELLRAADVDESGTIDYGEFLAATIHLNKL), 395-430 (EREENLVAAFSFFDKDASGYITIEELQQAWKEFGIN), and 434-464 (LDEMIKDIDQDNDGQIDYGEFVAMMRKGNGT). Ca(2+)-binding residues include Asp336, Asp338, Ser340, Thr342, Glu347, Asp372, Asp374, Ser376, Thr378, Glu383, Asp408, Asp410, Ser412, Tyr414, Glu419, Asp442, Asp444, Asp446, Gln448, and Glu453.

The protein belongs to the protein kinase superfamily. Ser/Thr protein kinase family. CDPK subfamily. In terms of assembly, interacts weakly with DI19. Ubiquitously expressed.

It carries out the reaction L-seryl-[protein] + ATP = O-phospho-L-seryl-[protein] + ADP + H(+). The enzyme catalyses L-threonyl-[protein] + ATP = O-phospho-L-threonyl-[protein] + ADP + H(+). With respect to regulation, activated by calcium. Autophosphorylation may play an important role in the regulation of the kinase activity. May play a role in signal transduction pathways that involve calcium as a second messenger. The polypeptide is Calcium-dependent protein kinase 12 (CPK12) (Arabidopsis thaliana (Mouse-ear cress)).